The following is a 602-amino-acid chain: Leucine-rich repeat-containing protein 40 (602 aa).

The tract at residues 1–22 is disordered; sequence MSRLKRIAGQDPRAGFKEGGRD. Serine 71 carries the post-translational modification Phosphoserine. LRR repeat units lie at residues 83–104, 106–127, 129–150, 152–173, 175–196, 198–219, 221–242, 244–265, 266–286, 290–311, 313–335, 336–356, 400–421, 426–447, 450–472, 473–494, 496–517, 519–540, 543–564, and 566–586; these read DLTK…LRLL, ALTV…IREL, NLQK…ITNL, NLKC…FEQF, NLED…FSSL, SLVR…INRM, RLKH…LAGM, SLEL…PSCS, LLKE…EHLK, SILV…IILL, SLER…GNLH, LKFL…IINK, TLKI…VFDA, IITS…MVEL, MVSD…CVLQ, KLTF…VESL, RLQT…LYRI, TLET…KMKM, NLTT…LGNC, and NLRT…AILM.

This Pongo abelii (Sumatran orangutan) protein is Leucine-rich repeat-containing protein 40 (LRRC40).